The chain runs to 166 residues: Thiol peroxidase (166 aa).

Residues 18–164 form the Thioredoxin domain; it reads VKVGDKAPNF…YEKAIEAAKA (147 aa). The active-site Cysteine sulfenic acid (-SOH) intermediate is cysteine 60. The cysteines at positions 60 and 94 are disulfide-linked.

This sequence belongs to the peroxiredoxin family. Tpx subfamily. As to quaternary structure, homodimer.

It catalyses the reaction a hydroperoxide + [thioredoxin]-dithiol = an alcohol + [thioredoxin]-disulfide + H2O. In terms of biological role, thiol-specific peroxidase that catalyzes the reduction of hydrogen peroxide and organic hydroperoxides to water and alcohols, respectively. Plays a role in cell protection against oxidative stress by detoxifying peroxides. The chain is Thiol peroxidase from Halalkalibacterium halodurans (strain ATCC BAA-125 / DSM 18197 / FERM 7344 / JCM 9153 / C-125) (Bacillus halodurans).